A 200-amino-acid chain; its full sequence is uncharacterized protein (200 aa).

In terms of biological role, involved in osmoadaptation. This is an uncharacterized protein from Emericella nidulans (strain FGSC A4 / ATCC 38163 / CBS 112.46 / NRRL 194 / M139) (Aspergillus nidulans).